We begin with the raw amino-acid sequence, 269 residues long: Type III pantothenate kinase (269 aa).

An ATP-binding site is contributed by 9–16; it reads DVGNTSVK. Residues Tyr-106 and 113–116 each bind substrate; that span reads GADR. Asp-115 (proton acceptor) is an active-site residue. Asp-137 is a K(+) binding site. Thr-140 is an ATP binding site. A substrate-binding site is contributed by Thr-193.

Belongs to the type III pantothenate kinase family. Homodimer. Requires NH4(+) as cofactor. K(+) serves as cofactor.

The protein localises to the cytoplasm. It catalyses the reaction (R)-pantothenate + ATP = (R)-4'-phosphopantothenate + ADP + H(+). It participates in cofactor biosynthesis; coenzyme A biosynthesis; CoA from (R)-pantothenate: step 1/5. Functionally, catalyzes the phosphorylation of pantothenate (Pan), the first step in CoA biosynthesis. This is Type III pantothenate kinase from Lawsonia intracellularis (strain PHE/MN1-00).